The chain runs to 368 residues: 1-aminocyclopropane-1-carboxylate synthase (368 aa).

Lysine 230 carries the post-translational modification N6-(pyridoxal phosphate)lysine.

Belongs to the class-I pyridoxal-phosphate-dependent aminotransferase family. As to quaternary structure, homodimer. Pyridoxal 5'-phosphate is required as a cofactor.

It catalyses the reaction S-adenosyl-L-methionine = 1-aminocyclopropane-1-carboxylate + S-methyl-5'-thioadenosine + H(+). Its pathway is alkene biosynthesis; ethylene biosynthesis via S-adenosyl-L-methionine; ethylene from S-adenosyl-L-methionine: step 1/2. Its function is as follows. Catalyzes the formation of 1-aminocyclopropane-1-carboxylate, a direct precursor of ethylene in higher plants. This chain is 1-aminocyclopropane-1-carboxylate synthase (ACS5), found in Vigna radiata var. radiata (Mung bean).